Here is a 124-residue protein sequence, read N- to C-terminus: uncharacterized protein (124 aa).

A GIY-YIG domain is found at 42-118 (DKGGIFMFYN…INTQHSKYNI (77 aa)).

This is an uncharacterized protein from Bacillus subtilis (strain 168).